The sequence spans 327 residues: Apoptosis facilitator Bcl-2-like protein 14 (327 aa).

Ser-44 is modified (phosphoserine). A BH3 motif is present at residues 212 to 226; sequence IVELLKYSGDQLERK. Residues 308–315 carry the BH2 motif; that stretch reads WIQQHGGW.

This sequence belongs to the Bcl-2 family. In terms of processing, phosphorylated by MELK, leading to inhibit its pro-apoptotic function. Isoform 1 is widely expressed. Isoform 2 is testis-specific.

The protein resides in the cytoplasm. Its subcellular location is the cytosol. The protein localises to the endomembrane system. Its function is as follows. Plays a role in apoptosis. The polypeptide is Apoptosis facilitator Bcl-2-like protein 14 (BCL2L14) (Homo sapiens (Human)).